The sequence spans 209 residues: Large ribosomal subunit protein uL3 (209 aa).

At glutamine 150 the chain carries N5-methylglutamine.

This sequence belongs to the universal ribosomal protein uL3 family. As to quaternary structure, part of the 50S ribosomal subunit. Forms a cluster with proteins L14 and L19. In terms of processing, methylated by PrmB.

Functionally, one of the primary rRNA binding proteins, it binds directly near the 3'-end of the 23S rRNA, where it nucleates assembly of the 50S subunit. This chain is Large ribosomal subunit protein uL3, found in Klebsiella pneumoniae (strain 342).